A 193-amino-acid chain; its full sequence is Ion-translocating oxidoreductase complex subunit A (193 aa).

6 helical membrane passes run 5–25, 39–59, 62–82, 102–122, 134–154, and 170–190; these read LMLL…FLGL, IGMG…TWLI, FLLV…LVIA, VLGI…VALL, VLYG…FAGL, and APIS…FAGL.

Belongs to the NqrDE/RnfAE family. In terms of assembly, the complex is composed of six subunits: RnfA, RnfB, RnfC, RnfD, RnfE and RnfG.

It localises to the cell inner membrane. Part of a membrane-bound complex that couples electron transfer with translocation of ions across the membrane. In Azoarcus sp. (strain BH72), this protein is Ion-translocating oxidoreductase complex subunit A.